The following is a 125-amino-acid chain: Phosphoribosyl-AMP cyclohydrolase (125 aa).

D91 is a binding site for Mg(2+). Position 92 (C92) interacts with Zn(2+). D93 and D95 together coordinate Mg(2+). Residues C108 and C115 each contribute to the Zn(2+) site.

It belongs to the PRA-CH family. As to quaternary structure, homodimer. Requires Mg(2+) as cofactor. Zn(2+) is required as a cofactor.

The protein resides in the cytoplasm. The catalysed reaction is 1-(5-phospho-beta-D-ribosyl)-5'-AMP + H2O = 1-(5-phospho-beta-D-ribosyl)-5-[(5-phospho-beta-D-ribosylamino)methylideneamino]imidazole-4-carboxamide. It participates in amino-acid biosynthesis; L-histidine biosynthesis; L-histidine from 5-phospho-alpha-D-ribose 1-diphosphate: step 3/9. Its function is as follows. Catalyzes the hydrolysis of the adenine ring of phosphoribosyl-AMP. This is Phosphoribosyl-AMP cyclohydrolase from Streptomyces griseus subsp. griseus (strain JCM 4626 / CBS 651.72 / NBRC 13350 / KCC S-0626 / ISP 5235).